The primary structure comprises 129 residues: MATKKGTRKRRVKKNIETGVAHIHSTFNNTLIMITDVQGNAVAWSSAGVLGFKGSRKSTPFAAQMASEAAAKQAMEHGMKTVEVEVKGPGSGRESAIRALQTTGLEVTAIRDVTPVPHNGSRPPKRRRV.

Belongs to the universal ribosomal protein uS11 family. As to quaternary structure, part of the 30S ribosomal subunit. Interacts with proteins S7 and S18. Binds to IF-3.

Its function is as follows. Located on the platform of the 30S subunit, it bridges several disparate RNA helices of the 16S rRNA. Forms part of the Shine-Dalgarno cleft in the 70S ribosome. In Limosilactobacillus fermentum (strain NBRC 3956 / LMG 18251) (Lactobacillus fermentum), this protein is Small ribosomal subunit protein uS11.